Consider the following 335-residue polypeptide: Methionine import ATP-binding protein MetN 1 (335 aa).

The ABC transporter domain occupies Ile-2 to Val-242. An ATP-binding site is contributed by Gly-38–Ser-45.

The protein belongs to the ABC transporter superfamily. Methionine importer (TC 3.A.1.24) family. In terms of assembly, the complex is composed of two ATP-binding proteins (MetN), two transmembrane proteins (MetI) and a solute-binding protein (MetQ).

It is found in the cell inner membrane. The catalysed reaction is L-methionine(out) + ATP + H2O = L-methionine(in) + ADP + phosphate + H(+). It catalyses the reaction D-methionine(out) + ATP + H2O = D-methionine(in) + ADP + phosphate + H(+). In terms of biological role, part of the ABC transporter complex MetNIQ involved in methionine import. Responsible for energy coupling to the transport system. This is Methionine import ATP-binding protein MetN 1 from Pseudomonas fluorescens (strain Pf0-1).